Consider the following 660-residue polypeptide: U-box domain-containing protein 13 (660 aa).

The segment at 227–252 is disordered; sequence DDNGEEQKVGVNSRSNGQTSTAASQK. Positions 236–250 are enriched in polar residues; that stretch reads GVNSRSNGQTSTAAS. One can recognise a U-box domain in the interval 255 to 329; sequence VIPDDFRCPI…AQWCEANDIE (75 aa). 5 ARM repeats span residues 384 to 423, 425 to 464, 466 to 505, 507 to 546, and 548 to 587; these read ADNR…NLSI, ENNK…SLSV, DENK…NLCI, QGNK…ILSS, and PEGK…HLCS. The tract at residues 631–660 is disordered; that stretch reads AEQQKETAVSQPEEEAEPTHPESTTEAADT. Residues 651–660 are compositionally biased toward polar residues; it reads PESTTEAADT.

In terms of assembly, binds to SD11, SD16, SD17, SD18, SD113, SD129 and SD25. Phosphorylated by SD1-6 and SD1-7.

Its subcellular location is the nucleus. The protein localises to the cytoplasm. It carries out the reaction S-ubiquitinyl-[E2 ubiquitin-conjugating enzyme]-L-cysteine + [acceptor protein]-L-lysine = [E2 ubiquitin-conjugating enzyme]-L-cysteine + N(6)-ubiquitinyl-[acceptor protein]-L-lysine.. Its pathway is protein modification; protein ubiquitination. Functions as an E3 ubiquitin ligase. This Arabidopsis thaliana (Mouse-ear cress) protein is U-box domain-containing protein 13 (PUB13).